The chain runs to 78 residues: Protein SlyX homolog (78 aa).

The protein belongs to the SlyX family.

The chain is Protein SlyX homolog from Xylella fastidiosa (strain 9a5c).